Here is a 451-residue protein sequence, read N- to C-terminus: MAEGEDAGWWRSWLQQSYQAVKEKSTEALEFMKRDLAEFTQVVQHDTACTIAATASVVKDRLARTEASGATEKVRKGISDFLGVISDTFAPSPDKTIDCDVITLMATPTGTTEPYDSAKARLYSLQSDPATYCNEPDGPAELLEAWLSRFSLEEKKGEIAELLATSPSIRALYTKMVPAAVSHSEFWQRYFYKVHRLEQDEVRREALKQRAEQSIHQEEPGWEEDEEEFLGMSPLPCANVKFPQAAEKASVSAALEGSQPSVHKGPSGESWAILPPELAPAEGSPSESSESVSLVTQIANPASVPVVQLQTGVQPSGNRDLSQRLLEATSEEQSPLPKPPEPGHPSAAAQEPAVCSEQTAVTGPKEVESKAQGRTETLKEEGPTDLRVFELNSDSGKSTPSNNGKKGSSTDISEDWEKDFDLDMTEEEVQLALSKVEVSGELEDEEWEDWE.

Positions Trp146 to Glu198 constitute a BSD domain. 2 disordered regions span residues Ser252 to Thr296 and Leu309 to Met424. Residues Pro275–Val295 show a composition bias toward low complexity. Residues Leu309–Asp320 show a composition bias toward polar residues. The span at Lys365–Val388 shows a compositional bias: basic and acidic residues. A compositionally biased stretch (polar residues) spans Asn392–Asp411. The span at Ile412–Met424 shows a compositional bias: acidic residues.

This chain is BSD domain-containing protein 1 (BSDC1), found in Gallus gallus (Chicken).